The chain runs to 364 residues: Probable UDP-arabinopyranose mutase 1 (364 aa).

The DXD motif signature appears at Asp110–Asp112. N-linked (Glc...) arginine glycosylation is present at Arg158.

The protein belongs to the RGP family. Homopentamer or homohexamer. It depends on Mn(2+) as a cofactor. The cofactor is Mg(2+). In terms of processing, reversibly glycosylated by UDP-glucose, UDP-xylose and UDP-galactose.

It localises to the secreted. It is found in the cell wall. Its subcellular location is the cell junction. The protein resides in the plasmodesma. The protein localises to the golgi apparatus. It carries out the reaction UDP-beta-L-arabinofuranose = UDP-beta-L-arabinopyranose. In terms of biological role, probable UDP-L-arabinose mutase involved in the biosynthesis of cell wall non-cellulosic polysaccharides. Was initially shown to possess an autoglycosylating activity which is dependent on the presence of UDP-glucose and manganese. This Zea mays (Maize) protein is Probable UDP-arabinopyranose mutase 1.